Reading from the N-terminus, the 214-residue chain is Anti-sigma-F factor NrsF (214 aa).

Topologically, residues 1–25 (MRTDDLIDALAADAGRGTEPAPPRR) are cytoplasmic. The chain crosses the membrane as a helical span at residues 26-46 (LALVAGLGGVAALLLVLGWLQ). Residues 47 to 53 (ARPDLGQ) lie on the Periplasmic side of the membrane. Residues 54-74 (AILGPMFWVKAIYTGLLGLAG) traverse the membrane as a helical segment. Residues 75–90 (YLAVERLSRPGGSGRR) are Cytoplasmic-facing. The helical transmembrane segment at 91 to 111 (GWIIGAVVFGACAVAGIYQAI) threads the bilayer. Residues 112 to 134 (TSPDVQAALKLLHGYSWRSCSPR) are Periplasmic-facing. A helical membrane pass occupies residues 135-155 (ILVLGLPMLALGLWALRGMAP). The Cytoplasmic portion of the chain corresponds to 156-158 (TRP). Residues 159-179 (GLAGFAMGLFSGGVVATLYGL) traverse the membrane as a helical segment. The Periplasmic segment spans residues 180–185 (HCPEHT). Residues 186–206 (FTFLALWYSLGVLALGLIGGW) form a helical membrane-spanning segment. The Cytoplasmic segment spans residues 207–214 (AGRWLLRW).

The protein belongs to the NrsF anti-sigma-F factor family.

Its subcellular location is the cell inner membrane. Its function is as follows. An anti-sigma factor for extracytoplasmic function (ECF) sigma factor sigma-F (SigF), which responds to chromate and cadmium. Overexpression leads to loss of response to dichromate. ECF sigma factors are held in an inactive form by a cognate anti-sigma factor. This chain is Anti-sigma-F factor NrsF, found in Caulobacter vibrioides (strain NA1000 / CB15N) (Caulobacter crescentus).